The primary structure comprises 210 residues: Small ribosomal subunit protein uS7 (210 aa).

The protein belongs to the universal ribosomal protein uS7 family.

This chain is Small ribosomal subunit protein uS7 (RPS5), found in Podocoryna carnea (Hydrozoan).